A 447-amino-acid chain; its full sequence is Kynurenine 3-monooxygenase (447 aa).

Belongs to the aromatic-ring hydroxylase family. KMO subfamily. It depends on FAD as a cofactor.

It catalyses the reaction L-kynurenine + NADPH + O2 + H(+) = 3-hydroxy-L-kynurenine + NADP(+) + H2O. Its pathway is cofactor biosynthesis; NAD(+) biosynthesis; quinolinate from L-kynurenine: step 1/3. Functionally, catalyzes the hydroxylation of L-kynurenine (L-Kyn) to form 3-hydroxy-L-kynurenine (L-3OHKyn). Required for synthesis of quinolinic acid. This chain is Kynurenine 3-monooxygenase, found in Christiangramia forsetii (strain DSM 17595 / CGMCC 1.15422 / KT0803) (Gramella forsetii).